The chain runs to 489 residues: Dipeptide and tripeptide permease B (489 aa).

Topologically, residues 1–27 (MNTTAPTGLLQQPRPFFMIFFVELWER) are cytoplasmic. The helical transmembrane segment at 28-48 (FGYYGVQGILAVFFVKQLGFS) threads the bilayer. The Periplasmic portion of the chain corresponds to 49-52 (QEQA). Residues 53–73 (FITFGAFAALVYGLISIGGYV) traverse the membrane as a helical segment. Topologically, residues 74 to 82 (GDHLLGTKR) are cytoplasmic. The helical transmembrane segment at 83–103 (TLVLGAIVLAIGYFMTGMSLL) threads the bilayer. The Periplasmic segment spans residues 104 to 106 (NPD). A helical transmembrane segment spans residues 107 to 127 (LIFIALGTIAVGNGLFKANPA). At 128–146 (SLLSKCYQPKDPRLDGAFT) the chain is on the cytoplasmic side. A helical transmembrane segment spans residues 147–167 (LFYMSINIGSLLSLSLAPVIA). At 168-172 (DKFGY) the chain is on the periplasmic side. A helical membrane pass occupies residues 173 to 193 (AVTYNLCGAGLIVALLVYFAC). The Cytoplasmic segment spans residues 194 to 214 (RGMVKNIGSEPDHKPLRFRNL). Residues 215 to 235 (LLVLLGTVVMIFLCAWLMHNV) traverse the membrane as a helical segment. A topological domain (periplasmic) is located at residue lysine 236. Residues 237 to 257 (IANLVLIVLSIVVTIFFFREA) traverse the membrane as a helical segment. Over 258-267 (FRLDKTGRNK) the chain is Cytoplasmic. The helical transmembrane segment at 268–288 (MFVAFILMIEAVLFYILYAQM) threads the bilayer. The Periplasmic portion of the chain corresponds to 289–315 (PTSLNFFAINNVHHEILGFAINPVSFQ). A helical membrane pass occupies residues 316 to 338 (ALNPFWVVVASPVLAAIYTRLGS). Residues 339 to 348 (KGKDLTMPMK) lie on the Cytoplasmic side of the membrane. The chain crosses the membrane as a helical span at residues 349 to 369 (FTLGMFLCALGFLTAAAGMWF). At 370 to 379 (ADAQGLTSPW) the chain is on the periplasmic side. A helical membrane pass occupies residues 380–400 (FIVLVYLFQSLGELLISALGL). Topologically, residues 401 to 410 (AMVAALVPQH) are cytoplasmic. Residues 411–431 (LMGFILGMWFLTQAAAFLLGG) form a helical membrane-spanning segment. Residues 432–454 (YVATFTAVPENITDPLQTLPIYT) are Periplasmic-facing. Residues 455 to 475 (GVFSKIGLVTLAVTVVMAIMV) traverse the membrane as a helical segment. Topologically, residues 476–489 (PWLNRMINTPGTEQ) are cytoplasmic.

The protein belongs to the major facilitator superfamily. Proton-dependent oligopeptide transporter (POT/PTR) (TC 2.A.17) family. DtpB subfamily.

The protein localises to the cell inner membrane. Functionally, proton-dependent permease that transports di- and tripeptides. The sequence is that of Dipeptide and tripeptide permease B from Salmonella typhimurium (strain LT2 / SGSC1412 / ATCC 700720).